Here is a 642-residue protein sequence, read N- to C-terminus: Chaperone protein DnaK (642 aa).

Thr196 is subject to Phosphothreonine; by autocatalysis. The segment covering 593–603 has biased composition (polar residues); the sequence is STMYQTPSGDT. Residues 593-642 are disordered; it reads STMYQTPSGDTPPSEPETGASEESKGGDKTQGDGEVDAEYEVIDGNDKDK. A compositionally biased stretch (basic and acidic residues) spans 614–624; sequence EESKGGDKTQG. Residues 626 to 636 show a composition bias toward acidic residues; the sequence is GEVDAEYEVID.

This sequence belongs to the heat shock protein 70 family.

Acts as a chaperone. The polypeptide is Chaperone protein DnaK (Chlorobium phaeobacteroides (strain BS1)).